A 1273-amino-acid polypeptide reads, in one-letter code: Homeobox protein cut-like ceh-44 (1273 aa).

2 coiled-coil regions span residues 101 to 407 and 440 to 468; these read LLKG…DGFK and RQKN…KFED. 3 consecutive DNA-binding regions (CUT) follow at residues 591–681, 832–919, and 978–1065; these read NVQA…LSPR, QAQY…KQPK, and IDES…KEES. The segment at 1069-1100 is disordered; sequence VKAKIESVPAPREAPRPVKRKHSSDTDDYDLN. Residues 1103-1162 constitute a DNA-binding region (homeobox); that stretch reads KPIQRTVITDYQKDTLRFVFVNEQHPSNELCEQISLKLDMSLRTVQNWFHNHRTRSKARE.

The protein belongs to the CUT homeobox family.

It localises to the nucleus. In terms of biological role, probable DNA-binding regulatory protein involved in cell-fate specification. This is Homeobox protein cut-like ceh-44 from Caenorhabditis elegans.